The primary structure comprises 216 residues: Uracil phosphoribosyltransferase (216 aa).

Residues Arg-85, Arg-110, and 135–143 (DPMVATGYS) each bind 5-phospho-alpha-D-ribose 1-diphosphate. Residues Ile-200 and 205 to 207 (GDA) contribute to the uracil site. Residue Asp-206 participates in 5-phospho-alpha-D-ribose 1-diphosphate binding.

This sequence belongs to the UPRTase family. Mg(2+) is required as a cofactor.

It carries out the reaction UMP + diphosphate = 5-phospho-alpha-D-ribose 1-diphosphate + uracil. It participates in pyrimidine metabolism; UMP biosynthesis via salvage pathway; UMP from uracil: step 1/1. With respect to regulation, allosterically activated by GTP. Catalyzes the conversion of uracil and 5-phospho-alpha-D-ribose 1-diphosphate (PRPP) to UMP and diphosphate. This chain is Uracil phosphoribosyltransferase, found in Paraburkholderia phymatum (strain DSM 17167 / CIP 108236 / LMG 21445 / STM815) (Burkholderia phymatum).